A 365-amino-acid polypeptide reads, in one-letter code: DNA replication and repair protein RecF (365 aa).

23–30 serves as a coordination point for ATP; sequence GPNGIGKS.

It belongs to the RecF family.

The protein resides in the cytoplasm. In terms of biological role, the RecF protein is involved in DNA metabolism; it is required for DNA replication and normal SOS inducibility. RecF binds preferentially to single-stranded, linear DNA. It also seems to bind ATP. The sequence is that of DNA replication and repair protein RecF from Parasynechococcus marenigrum (strain WH8102).